We begin with the raw amino-acid sequence, 497 residues long: Glycerol kinase (497 aa).

Residue T12 coordinates ADP. ATP is bound by residues T12, T13, and S14. Residue T12 coordinates sn-glycerol 3-phosphate. An ADP-binding site is contributed by R16. Residues R82, E83, Y133, and D243 each coordinate sn-glycerol 3-phosphate. Positions 82, 83, 133, 243, and 244 each coordinate glycerol. Residues T265 and G308 each coordinate ADP. 4 residues coordinate ATP: T265, G308, Q312, and G409. ADP is bound at residue G409.

The protein belongs to the FGGY kinase family.

It catalyses the reaction glycerol + ATP = sn-glycerol 3-phosphate + ADP + H(+). It participates in polyol metabolism; glycerol degradation via glycerol kinase pathway; sn-glycerol 3-phosphate from glycerol: step 1/1. With respect to regulation, inhibited by fructose 1,6-bisphosphate (FBP). Its function is as follows. Key enzyme in the regulation of glycerol uptake and metabolism. Catalyzes the phosphorylation of glycerol to yield sn-glycerol 3-phosphate. The sequence is that of Glycerol kinase from Dichelobacter nodosus (strain VCS1703A).